Reading from the N-terminus, the 246-residue chain is Protein-lysine N-methyltransferase EFM6 (246 aa).

S-adenosyl-L-methionine-binding positions include W51, 87-89 (GSG), D115, W143, and A169.

This sequence belongs to the class I-like SAM-binding methyltransferase superfamily. METTL21 family. EFM6 subfamily.

The protein localises to the cytoplasm. S-adenosyl-L-methionine-dependent protein-lysine N-methyltransferase that methylates elongation factor 1-alpha (TEF1 and TEF2) at 'Lys-390'. The polypeptide is Protein-lysine N-methyltransferase EFM6 (Saccharomyces cerevisiae (strain ATCC 204508 / S288c) (Baker's yeast)).